Consider the following 189-residue polypeptide: Orcokinin peptides (189 aa).

An N-terminal signal peptide occupies residues 1 to 21 (MRGAGGALAVAVAALLVCCSA). Propeptides lie at residues 22 to 124 (DPHQ…TFVK) and 145 to 174 (FYHL…PIGS).

The protein belongs to the orcokinin family. Orcokinin-like peptide: Expressed in corpora cardiaca (CC), corpora allata (CA), antennal lobe (AL) and gnathal ganglion (GNG) (at protein level). Expression in CC, CA and GNG detected in some animals, in AL in few animals (at protein level). Orcokinin-like peptide precursor-related peptide: Expressed in corpora cardiaca (CC), corpora allata (CA), antennal lobe (AL) and gnathal ganglion (GNG) (at protein level). Expression in GNG detected in most animals, expression in CC, CA and AL detected in some animals (at protein level).

The protein localises to the secreted. In terms of biological role, myotropic peptides. In Agrotis ipsilon (Black cutworm moth), this protein is Orcokinin peptides.